Reading from the N-terminus, the 134-residue chain is Profilin-4 (134 aa).

Cysteine 13 and cysteine 118 are oxidised to a cystine. The Involved in PIP2 interaction motif lies at 84 to 100 (AVIRGKKGSGGITIKKT). Phosphothreonine is present on threonine 114.

This sequence belongs to the profilin family. As to quaternary structure, occurs in many kinds of cells as a complex with monomeric actin in a 1:1 ratio. Phosphorylated by MAP kinases.

Its subcellular location is the cytoplasm. The protein resides in the cytoskeleton. In terms of biological role, binds to actin and affects the structure of the cytoskeleton. At high concentrations, profilin prevents the polymerization of actin, whereas it enhances it at low concentrations. The sequence is that of Profilin-4 from Olea europaea (Common olive).